The following is a 362-amino-acid chain: Dihydroorotate dehydrogenase (quinone) (362 aa).

FMN-binding positions include 62 to 66 (AGYDK) and T86. Residue K66 participates in substrate binding. Residue 111–115 (NRLGF) participates in substrate binding. FMN-binding residues include N139 and N170. N170 serves as a coordination point for substrate. S173 functions as the Nucleophile in the catalytic mechanism. N175 is a binding site for substrate. Residues K215 and S243 each contribute to the FMN site. 244 to 245 (NT) is a substrate binding site. Residues G266, G295, and 316 to 317 (YS) contribute to the FMN site.

It belongs to the dihydroorotate dehydrogenase family. Type 2 subfamily. In terms of assembly, monomer. FMN is required as a cofactor.

The protein resides in the cell membrane. The catalysed reaction is (S)-dihydroorotate + a quinone = orotate + a quinol. The protein operates within pyrimidine metabolism; UMP biosynthesis via de novo pathway; orotate from (S)-dihydroorotate (quinone route): step 1/1. Catalyzes the conversion of dihydroorotate to orotate with quinone as electron acceptor. The polypeptide is Dihydroorotate dehydrogenase (quinone) (Rhizobium etli (strain CIAT 652)).